The chain runs to 1216 residues: ATP-dependent helicase/nuclease subunit A (1216 aa).

A UvrD-like helicase ATP-binding domain is found at glutamine 26–serine 488. Alanine 47–threonine 54 lines the ATP pocket. The 288-residue stretch at lysine 515–glycine 802 folds into the UvrD-like helicase C-terminal domain.

Belongs to the helicase family. AddA subfamily. As to quaternary structure, heterodimer of AddA and AddB/RexB. It depends on Mg(2+) as a cofactor.

The enzyme catalyses Couples ATP hydrolysis with the unwinding of duplex DNA by translocating in the 3'-5' direction.. It catalyses the reaction ATP + H2O = ADP + phosphate + H(+). The heterodimer acts as both an ATP-dependent DNA helicase and an ATP-dependent, dual-direction single-stranded exonuclease. Recognizes the chi site generating a DNA molecule suitable for the initiation of homologous recombination. The AddA nuclease domain is required for chi fragment generation; this subunit has the helicase and 3' -&gt; 5' nuclease activities. The polypeptide is ATP-dependent helicase/nuclease subunit A (Streptococcus pneumoniae (strain ATCC 700669 / Spain 23F-1)).